Reading from the N-terminus, the 349-residue chain is Adenine deaminase (349 aa).

His-24, His-26, and His-204 together coordinate Zn(2+). Glu-207 acts as the Proton donor in catalysis. Asp-285 contributes to the Zn(2+) binding site. Asp-286 is a binding site for substrate.

The protein belongs to the metallo-dependent hydrolases superfamily. Adenosine and AMP deaminases family. Adenine deaminase type 2 subfamily. Requires Zn(2+) as cofactor.

The catalysed reaction is adenine + H2O + H(+) = hypoxanthine + NH4(+). Functionally, catalyzes the hydrolytic deamination of adenine to hypoxanthine. Plays an important role in the purine salvage pathway and in nitrogen catabolism. This chain is Adenine deaminase, found in Trichlorobacter lovleyi (strain ATCC BAA-1151 / DSM 17278 / SZ) (Geobacter lovleyi).